Reading from the N-terminus, the 325-residue chain is WUSCHEL-related homeobox 8 (325 aa).

A DNA-binding region (homeobox; WUS-type) is located at residues 51–115 (DPKPRWNPKP…NRKSRAKHKL (65 aa)).

The protein belongs to the WUS homeobox family. In terms of tissue distribution, expressed only in the egg cell. Not detected in the pollen tube. Expressed in the zygote, the basal cell, and later the suspensor. Expressed in all suspensor cells, except the hypophysis, and in the embryo surrounding region (ESR) endosperm cells. Strongly expressed in the suspensor cells, with a weak expression also detected throughout the developing embryo.

It localises to the nucleus. In terms of biological role, probable transcription factor, which may be involved in embryonic patterning. May be required for basal embryo development after fertilization. Acts partially redundantly with STIP in promoting embryonic cell division and proliferation. Promotes cotyledon boundary formation by maintaining the symmetry in CUC genes expression domains. In Arabidopsis thaliana (Mouse-ear cress), this protein is WUSCHEL-related homeobox 8.